Reading from the N-terminus, the 176-residue chain is Large ribosomal subunit protein uL10 (176 aa).

This sequence belongs to the universal ribosomal protein uL10 family. Part of the ribosomal stalk of the 50S ribosomal subunit. The N-terminus interacts with L11 and the large rRNA to form the base of the stalk. The C-terminus forms an elongated spine to which L12 dimers bind in a sequential fashion forming a multimeric L10(L12)X complex.

Functionally, forms part of the ribosomal stalk, playing a central role in the interaction of the ribosome with GTP-bound translation factors. In Hahella chejuensis (strain KCTC 2396), this protein is Large ribosomal subunit protein uL10.